The sequence spans 551 residues: Protein GPR107 (551 aa).

A signal peptide spans 1–33; the sequence is MAVRVPLGCTGSFCPRLLPLLALLELLVDPSLG. Residues 34-262 are Extracellular-facing; that stretch reads RVHHLALKDD…YLSAGEIPLP (229 aa). Asn64 carries an N-linked (GlcNAc...) asparagine glycan. The disordered stretch occupies residues 127–183; the sequence is GVKVRSPPEAGKQLPEIVFSKDEKVPSRSQEPAVSSNPKDSKVQRTPDGSKAQRSTV. Residues 153 to 164 show a composition bias toward polar residues; that stretch reads SRSQEPAVSSNP. The N-linked (GlcNAc...) asparagine glycan is linked to Asn209. Residues 263–283 form a helical membrane-spanning segment; the sequence is KLYVSMALLFFLSGTVWIHIL. Over 284–292 the chain is Cytoplasmic; sequence RKRRNDVFK. A helical membrane pass occupies residues 293-313; sequence IHWLMAALPFTKSLSLVFHAI. At 314-336 the chain is on the extracellular side; it reads DYHYISSQGFPIEGWAVVYYITH. A helical transmembrane segment spans residues 337–357; sequence LLKGALLFITIALIGTGWAFI. The Cytoplasmic portion of the chain corresponds to 358 to 367; that stretch reads KHILSDKDKK. Residues 368–388 form a helical membrane-spanning segment; the sequence is IFMIVIPLQVLANVAYIIIES. The Extracellular segment spans residues 389-401; the sequence is TEEGTTEYGLWKD. Residues 402–422 form a helical membrane-spanning segment; it reads SLFLVDLLCCGAILFPVVWSI. At 423 to 443 the chain is on the cytoplasmic side; it reads RHLQEASATDGKAAINLAKLK. A helical transmembrane segment spans residues 444-466; sequence LFRHYYVLIVCYIYFTRIIAFLL. Residues 467–475 lie on the Extracellular side of the membrane; sequence KFAVPFQWK. Residues 476-495 traverse the membrane as a helical segment; that stretch reads WLYQLLDETATLVFFVLTGY. Residues 496–551 are Cytoplasmic-facing; that stretch reads KFRPASDNPYLQLSQEEDDLEMESVVTTSGVMENMKKVKKVSNGAVEPQGSWEGTA.

The protein belongs to the LU7TM family. In terms of processing, cleaved by FURIN to yield two fragments that remain associated via a disulfide bond. As to expression, widely expressed. Not detected in the duodenum, nor in the exocrine pancreas.

It is found in the cell membrane. It localises to the golgi apparatus. The protein resides in the trans-Golgi network membrane. Has been proposed to act as a receptor for neuronostatin, a peptide derived from the somatostatin/SST precursor. Involved in blood sugar regulation through the induction of glucagon in response to low glucose. This is Protein GPR107 (Gpr107) from Rattus norvegicus (Rat).